Here is a 72-residue protein sequence, read N- to C-terminus: Exodeoxyribonuclease 7 small subunit (72 aa).

The protein belongs to the XseB family. As to quaternary structure, heterooligomer composed of large and small subunits.

It is found in the cytoplasm. The enzyme catalyses Exonucleolytic cleavage in either 5'- to 3'- or 3'- to 5'-direction to yield nucleoside 5'-phosphates.. Functionally, bidirectionally degrades single-stranded DNA into large acid-insoluble oligonucleotides, which are then degraded further into small acid-soluble oligonucleotides. The polypeptide is Exodeoxyribonuclease 7 small subunit (Clostridium kluyveri (strain NBRC 12016)).